Consider the following 284-residue polypeptide: Tropomyosin alpha-3 chain (284 aa).

Methionine 1 carries the N-acetylmethionine modification. The segment at 1–43 is disordered; that stretch reads MEAIKKKMQMLKLDKENALDRAEQAEAEQKQAEERSKQLEDEL. The stretch at 1 to 284 forms a coiled coil; the sequence is MEAIKKKMQM…DHALNDMTSI (284 aa). Glutamate 2 carries the post-translational modification N-acetylalanine. Basic and acidic residues predominate over residues 12–40; it reads KLDKENALDRAEQAEAEQKQAEERSKQLE. A Phosphothreonine modification is found at threonine 53. 2 positions are modified to phosphoserine: serine 61 and serine 87. Threonine 108 carries the post-translational modification Phosphothreonine. Serine 206 and serine 215 each carry phosphoserine. An N6-acetyllysine modification is found at leucine 228. Residue threonine 252 is modified to Phosphothreonine. A Phosphotyrosine modification is found at tyrosine 261. Phosphoserine is present on serine 271. Phosphothreonine is present on threonine 282. Serine 283 is modified (phosphoserine).

The protein belongs to the tropomyosin family. As to quaternary structure, homodimer. Heterodimer of an alpha (TPM1, TPM3 or TPM4) and a beta (TPM2) chain. Interacts with TMOD1. Interacts with TNNT1.

The protein localises to the cytoplasm. It localises to the cytoskeleton. Its function is as follows. Binds to actin filaments in muscle and non-muscle cells. Plays a central role, in association with the troponin complex, in the calcium dependent regulation of vertebrate striated muscle contraction. Smooth muscle contraction is regulated by interaction with caldesmon. In non-muscle cells is implicated in stabilizing cytoskeleton actin filaments. The polypeptide is Tropomyosin alpha-3 chain (TPM3) (Bos taurus (Bovine)).